The sequence spans 436 residues: Cyclin-A2-2 (436 aa).

The protein belongs to the cyclin family. Cyclin AB subfamily. In terms of tissue distribution, expressed in roots, stems, leaves, flowers and siliques.

The polypeptide is Cyclin-A2-2 (CYCA2-2) (Arabidopsis thaliana (Mouse-ear cress)).